The primary structure comprises 541 residues: Protein wntless homolog (541 aa).

Residues 1 to 42 (MAGAIIENMSTRKLCIVGGILLVFQVIAFLVGGLIAPSPTTA) form the signal peptide. Residues 43-232 (VPYMSVKCID…GIHQNGGFTK (190 aa)) are Lumenal-facing. The chain crosses the membrane as a helical span at residues 233-253 (VWFAMKTFLTPSILIIMVWYW). Residues 254–268 (RRITLMTRAPVLLEK) lie on the Cytoplasmic side of the membrane. The helical transmembrane segment at 269 to 289 (VIFALGISMTFINIPVEWFSI) threads the bilayer. Over 290–303 (GFDWTWMLLFGDIR) the chain is Lumenal. A helical membrane pass occupies residues 304 to 324 (QGIFYAMLLSFWIIFCGEHMM). The Cytoplasmic segment spans residues 325–331 (DQNERNR). Residues 332-352 (LSGYWKQVGPIAVGSFCLFIF) traverse the membrane as a helical segment. Residues 353 to 380 (DMCERGVQLKNPFYSIWTTEVGTELAMA) are Lumenal-facing. The helical transmembrane segment at 381-401 (FIIVAGICLCLYFLFLCFMVF) threads the bilayer. At 402–431 (QVFRNISGKQSSLPAMSKARRLHYEGLIFR) the chain is on the cytoplasmic side. A helical membrane pass occupies residues 432–452 (FKFLMLITLACAAMTVIFFIV). Topologically, residues 453–471 (SQVTEGHWKWGDITIQVNS) are lumenal. Residues 472–492 (AFFTGIYGMWNLYVFALMFLY) form a helical membrane-spanning segment. At 493-541 (APSHKNYGEDQSNGDLGVSSGEELQLTTTITHVDGPTEVYKLARKEAQE) the chain is on the cytoplasmic side.

The protein belongs to the wntless family.

The protein resides in the golgi apparatus membrane. It is found in the cytoplasmic vesicle membrane. May play an essential role in Wnt signaling pathway. May be required for Wnt-dependent patterning processes. The sequence is that of Protein wntless homolog (WLS) from Gallus gallus (Chicken).